The sequence spans 429 residues: Glutamate-1-semialdehyde 2,1-aminomutase 2 (429 aa).

Lys268 carries the N6-(pyridoxal phosphate)lysine modification.

Belongs to the class-III pyridoxal-phosphate-dependent aminotransferase family. HemL subfamily. As to quaternary structure, homodimer. It depends on pyridoxal 5'-phosphate as a cofactor.

The protein resides in the cytoplasm. It carries out the reaction (S)-4-amino-5-oxopentanoate = 5-aminolevulinate. The protein operates within porphyrin-containing compound metabolism; protoporphyrin-IX biosynthesis; 5-aminolevulinate from L-glutamyl-tRNA(Glu): step 2/2. This is Glutamate-1-semialdehyde 2,1-aminomutase 2 from Staphylococcus carnosus (strain TM300).